Consider the following 342-residue polypeptide: tRNA dimethylallyltransferase (342 aa).

G39–T46 serves as a coordination point for ATP. Residue T41 to T46 coordinates substrate. An interaction with substrate tRNA region spans residues D64–Q67.

The protein belongs to the IPP transferase family. As to quaternary structure, monomer. Requires Mg(2+) as cofactor.

It carries out the reaction adenosine(37) in tRNA + dimethylallyl diphosphate = N(6)-dimethylallyladenosine(37) in tRNA + diphosphate. In terms of biological role, catalyzes the transfer of a dimethylallyl group onto the adenine at position 37 in tRNAs that read codons beginning with uridine, leading to the formation of N6-(dimethylallyl)adenosine (i(6)A). This Chlamydia abortus (strain DSM 27085 / S26/3) (Chlamydophila abortus) protein is tRNA dimethylallyltransferase.